The following is a 388-amino-acid chain: GTPase Obg (388 aa).

An Obg domain is found at 1 to 159; the sequence is MKFVDEAVIR…RSLKLELLLL (159 aa). The region spanning 160–333 is the OBG-type G domain; it reads ADVGLLGMPN…LALKLLDYIA (174 aa). Residues 166 to 173, 191 to 195, 213 to 216, 283 to 286, and 314 to 316 each bind GTP; these read GMPNAGKS, FTTLV, DIPG, NKTD, and SAY. S173 and T193 together coordinate Mg(2+).

It belongs to the TRAFAC class OBG-HflX-like GTPase superfamily. OBG GTPase family. In terms of assembly, monomer. Requires Mg(2+) as cofactor.

It is found in the cytoplasm. Its function is as follows. An essential GTPase which binds GTP, GDP and possibly (p)ppGpp with moderate affinity, with high nucleotide exchange rates and a fairly low GTP hydrolysis rate. Plays a role in control of the cell cycle, stress response, ribosome biogenesis and in those bacteria that undergo differentiation, in morphogenesis control. The chain is GTPase Obg from Shewanella putrefaciens (strain CN-32 / ATCC BAA-453).